We begin with the raw amino-acid sequence, 420 residues long: Protein-lysine 6-oxidase (420 aa).

Positions 1–27 (MRCAPPGLLLAQLHACIFWSGLWPAGC) are cleaved as a signal peptide. Residues 28-171 (QSPPAAWRQR…RPGREDVMVG (144 aa)) constitute a propeptide, removed by BMP1. Positions 54–177 (AQYQPPRRRQ…VMVGDDPYSP (124 aa)) are disordered. A glycan (N-linked (GlcNAc...) asparagine) is linked at Asn78. Low complexity predominate over residues 82–92 (PRAAAAAAARP). The segment covering 93-105 (QPEPQPQAQPQPR) has biased composition (pro residues). 2 stretches are compositionally biased toward basic residues: residues 107-119 (RSSR…RRHW) and 134-147 (APRR…SRRR). At Tyr190 the chain carries Sulfotyrosine. Positions 216 to 420 (PDLVPDPYYI…YASGCTISPY (205 aa)) are lysyl-oxidase like. 5 disulfides stabilise this stretch: Cys241/Cys247, Cys294/Cys343, Cys327/Cys333, Cys354/Cys364, and Cys401/Cys415. 3 residues coordinate Cu cation: His295, His297, and His299. Positions 323-358 (KASFCLEDTSCDYGYYRRYACTAHTQGLSPGCYDTY) form a cross-link, lysine tyrosylquinone (Lys-Tyr). Residue Tyr358 is modified to 2',4',5'-topaquinone.

The protein belongs to the lysyl oxidase family. Cu cation is required as a cofactor. It depends on lysine tyrosylquinone residue as a cofactor. In terms of processing, the lysine tyrosylquinone cross-link (LTQ) is generated by condensation of the epsilon-amino group of a lysine with a topaquinone produced by oxidation of tyrosine. Post-translationally, proteolytically cleaved by BMP1 which removes the propeptide. Also proteolytically cleaved by ADAMTS2 and ADAMTS14, but not by ADAMTS3, at an additional cleavage site downstream of the BMP1 cleavage site. The propeptide plays a role in directing the deposition of this enzyme to elastic fibers, via interaction with tropoelastin. Cleavage by BMP1 to remove the propeptide does not increase enzymatic activity but increases binding to collagen. Cleavage by ADAMTS2 produces a form with reduced collagen-binding activity. Sulfated at Tyr-190 and also at either Tyr-186 or Tyr-187 which enhances binding to collagen.

Its subcellular location is the secreted. It localises to the extracellular space. It catalyses the reaction L-lysyl-[protein] + O2 + H2O = (S)-2-amino-6-oxohexanoyl-[protein] + H2O2 + NH4(+). Functionally, responsible for the post-translational oxidative deamination of peptidyl lysine residues in precursors to fibrous collagen and elastin. In terms of biological role, in addition to cross linking of extracellular matrix proteins, it may have a direct role in tumor suppression. The protein is Protein-lysine 6-oxidase (LOX) of Gallus gallus (Chicken).